A 129-amino-acid chain; its full sequence is Small ribosomal subunit protein uS11 (129 aa).

The protein belongs to the universal ribosomal protein uS11 family. In terms of assembly, part of the 30S ribosomal subunit. Interacts with proteins S7 and S18. Binds to IF-3.

In terms of biological role, located on the platform of the 30S subunit, it bridges several disparate RNA helices of the 16S rRNA. Forms part of the Shine-Dalgarno cleft in the 70S ribosome. This chain is Small ribosomal subunit protein uS11, found in Photobacterium profundum (strain SS9).